Here is a 368-residue protein sequence, read N- to C-terminus: Homoserine O-acetyltransferase (368 aa).

The region spanning 41 to 352 is the AB hydrolase-1 domain; sequence NVILITHALS…DYGHDSFLVE (312 aa). Ser-147 (nucleophile) is an active-site residue. Arg-219 provides a ligand contact to substrate. Catalysis depends on residues Asp-313 and His-346. Substrate is bound at residue Asp-347.

The protein belongs to the AB hydrolase superfamily. MetX family. As to quaternary structure, homodimer.

The protein localises to the cytoplasm. The catalysed reaction is L-homoserine + acetyl-CoA = O-acetyl-L-homoserine + CoA. The protein operates within amino-acid biosynthesis; L-methionine biosynthesis via de novo pathway; O-acetyl-L-homoserine from L-homoserine: step 1/1. Functionally, transfers an acetyl group from acetyl-CoA to L-homoserine, forming acetyl-L-homoserine. The sequence is that of Homoserine O-acetyltransferase from Nautilia profundicola (strain ATCC BAA-1463 / DSM 18972 / AmH).